Reading from the N-terminus, the 213-residue chain is FMN-dependent NADH:quinone oxidoreductase (213 aa).

Belongs to the azoreductase type 1 family. In terms of assembly, homodimer. Requires FMN as cofactor.

The enzyme catalyses 2 a quinone + NADH + H(+) = 2 a 1,4-benzosemiquinone + NAD(+). It catalyses the reaction N,N-dimethyl-1,4-phenylenediamine + anthranilate + 2 NAD(+) = 2-(4-dimethylaminophenyl)diazenylbenzoate + 2 NADH + 2 H(+). In terms of biological role, quinone reductase that provides resistance to thiol-specific stress caused by electrophilic quinones. Also exhibits azoreductase activity. Catalyzes the reductive cleavage of the azo bond in aromatic azo compounds to the corresponding amines. The sequence is that of FMN-dependent NADH:quinone oxidoreductase from Streptococcus agalactiae serotype III (strain NEM316).